The primary structure comprises 515 residues: ATP synthase subunit alpha (515 aa).

Residue 171–178 (GDRQTGKT) participates in ATP binding.

It belongs to the ATPase alpha/beta chains family. In terms of assembly, F-type ATPases have 2 components, CF(1) - the catalytic core - and CF(0) - the membrane proton channel. CF(1) has five subunits: alpha(3), beta(3), gamma(1), delta(1), epsilon(1). CF(0) has three main subunits: a(1), b(2) and c(9-12). The alpha and beta chains form an alternating ring which encloses part of the gamma chain. CF(1) is attached to CF(0) by a central stalk formed by the gamma and epsilon chains, while a peripheral stalk is formed by the delta and b chains.

The protein resides in the cell inner membrane. It catalyses the reaction ATP + H2O + 4 H(+)(in) = ADP + phosphate + 5 H(+)(out). In terms of biological role, produces ATP from ADP in the presence of a proton gradient across the membrane. The alpha chain is a regulatory subunit. This chain is ATP synthase subunit alpha, found in Xylella fastidiosa (strain 9a5c).